A 376-amino-acid chain; its full sequence is D-alanine--D-alanine ligase (376 aa).

Positions 150 to 358 constitute an ATP-grasp domain; it reads KIIFEKEGLP…YSELINKLIE (209 aa). 183-238 contacts ATP; it reads EGRLTYPCFVKPSNAGSSVGVNKASDRESLVKALNIAAKNDRRILVEEFINGREIE. Positions 311, 325, and 327 each coordinate Mg(2+).

It belongs to the D-alanine--D-alanine ligase family. The cofactor is Mg(2+). Mn(2+) serves as cofactor.

It localises to the cytoplasm. It catalyses the reaction 2 D-alanine + ATP = D-alanyl-D-alanine + ADP + phosphate + H(+). The protein operates within cell wall biogenesis; peptidoglycan biosynthesis. Functionally, cell wall formation. The chain is D-alanine--D-alanine ligase from Ruminiclostridium cellulolyticum (strain ATCC 35319 / DSM 5812 / JCM 6584 / H10) (Clostridium cellulolyticum).